Here is a 163-residue protein sequence, read N- to C-terminus: MIILGIDPGTAITGYGVIEFIGNRYKPITYSCLRTEPDLPLDLRLKKLYQGLMDIIKRYQPDCMAVEELFFNKNARTALAVGHARGIALLAGANSSIPVAEYTPLQVKQAVTGYGKAEKQQIQFMVKTLLSLPEIPKPDDVADALAVAICHAQWSSTFGGRIK.

Catalysis depends on residues D7, E67, and D140. Residues D7, E67, and D140 each coordinate Mg(2+).

Belongs to the RuvC family. Homodimer which binds Holliday junction (HJ) DNA. The HJ becomes 2-fold symmetrical on binding to RuvC with unstacked arms; it has a different conformation from HJ DNA in complex with RuvA. In the full resolvosome a probable DNA-RuvA(4)-RuvB(12)-RuvC(2) complex forms which resolves the HJ. It depends on Mg(2+) as a cofactor.

Its subcellular location is the cytoplasm. It catalyses the reaction Endonucleolytic cleavage at a junction such as a reciprocal single-stranded crossover between two homologous DNA duplexes (Holliday junction).. In terms of biological role, the RuvA-RuvB-RuvC complex processes Holliday junction (HJ) DNA during genetic recombination and DNA repair. Endonuclease that resolves HJ intermediates. Cleaves cruciform DNA by making single-stranded nicks across the HJ at symmetrical positions within the homologous arms, yielding a 5'-phosphate and a 3'-hydroxyl group; requires a central core of homology in the junction. The consensus cleavage sequence is 5'-(A/T)TT(C/G)-3'. Cleavage occurs on the 3'-side of the TT dinucleotide at the point of strand exchange. HJ branch migration catalyzed by RuvA-RuvB allows RuvC to scan DNA until it finds its consensus sequence, where it cleaves and resolves the cruciform DNA. This chain is Crossover junction endodeoxyribonuclease RuvC, found in Desulforamulus reducens (strain ATCC BAA-1160 / DSM 100696 / MI-1) (Desulfotomaculum reducens).